The chain runs to 368 residues: MVTGWHRPTWIEIDRAAIRENIKNEQNKLPENVDLWAVVKANAYGHGIIEVARTAKEAGAKGFCVAILDEALALREAGFQDDFILVLGATRKEDANLAAKNHISLTVFREDWLEELTLEAPLRIHLKVDSGMGRLGIRTTDEARRIETTIAKDNQLQLEGIYTHFATADQLETSYFEQQLAKFQTILTSLKNRPTYVHTANSAASLLQPQIGFDAIRFGISMYGLTPSTEIKTSLPFELKPALALYTEMVHVKELAPGDSVSYGATYTATEREWVATLPIGYADGLIRHYSGFHVLVDGELAPIIGRVCMDQTIIKLPREFQTGSKVTIIGTDHGNTITADDAAHYLDTINYEVTCLLNERIPRKYIH.

Lys40 (proton acceptor; specific for D-alanine) is an active-site residue. Residue Lys40 is modified to N6-(pyridoxal phosphate)lysine. Arg134 provides a ligand contact to substrate. Tyr263 serves as the catalytic Proton acceptor; specific for L-alanine. Residue Met310 coordinates substrate.

Belongs to the alanine racemase family. Pyridoxal 5'-phosphate is required as a cofactor.

It carries out the reaction L-alanine = D-alanine. Its pathway is amino-acid biosynthesis; D-alanine biosynthesis; D-alanine from L-alanine: step 1/1. In terms of biological role, catalyzes the interconversion of L-alanine and D-alanine. May also act on other amino acids. This chain is Alanine racemase (alr), found in Listeria monocytogenes serotype 4b (strain F2365).